We begin with the raw amino-acid sequence, 390 residues long: Phosphopentomutase (390 aa).

Positions 9, 283, 288, 324, 325, and 336 each coordinate Mn(2+).

It belongs to the phosphopentomutase family. Mn(2+) serves as cofactor.

It is found in the cytoplasm. The enzyme catalyses 2-deoxy-alpha-D-ribose 1-phosphate = 2-deoxy-D-ribose 5-phosphate. It carries out the reaction alpha-D-ribose 1-phosphate = D-ribose 5-phosphate. It participates in carbohydrate degradation; 2-deoxy-D-ribose 1-phosphate degradation; D-glyceraldehyde 3-phosphate and acetaldehyde from 2-deoxy-alpha-D-ribose 1-phosphate: step 1/2. Its function is as follows. Isomerase that catalyzes the conversion of deoxy-ribose 1-phosphate (dRib-1-P) and ribose 1-phosphate (Rib-1-P) to deoxy-ribose 5-phosphate (dRib-5-P) and ribose 5-phosphate (Rib-5-P), respectively. In Thermotoga petrophila (strain ATCC BAA-488 / DSM 13995 / JCM 10881 / RKU-1), this protein is Phosphopentomutase.